The sequence spans 254 residues: Zinc finger FYVE domain-containing protein 21 (254 aa).

Residues 44-104 (DKECPRCMQC…QCAGCAPVSR (61 aa)) form an FYVE-type zinc finger. Zn(2+) contacts are provided by cysteine 50, cysteine 53, cysteine 66, cysteine 69, cysteine 74, cysteine 77, cysteine 96, and cysteine 99. Residues 107–254 (ADFYDRQLKL…AKLLYESRDQ (148 aa)) form a PH-like region.

Interacts with PTK2/FAK1.

The protein resides in the cell junction. It localises to the focal adhesion. It is found in the cytoplasmic vesicle. Its subcellular location is the endosome. In terms of biological role, plays a role in cell adhesion, and thereby in cell motility which requires repeated formation and disassembly of focal adhesions. Regulates microtubule-induced PTK2/FAK1 dephosphorylation, an event important for focal adhesion disassembly, as well as integrin beta-1/ITGB1 cell surface expression. This Bos taurus (Bovine) protein is Zinc finger FYVE domain-containing protein 21 (ZFYVE21).